The sequence spans 363 residues: DNA replication and repair protein RecF (363 aa).

An ATP-binding site is contributed by 31–38 (GANSSGKT).

This sequence belongs to the RecF family.

It is found in the cytoplasm. In terms of biological role, the RecF protein is involved in DNA metabolism; it is required for DNA replication and normal SOS inducibility. RecF binds preferentially to single-stranded, linear DNA. It also seems to bind ATP. In Nitrosococcus oceani (strain ATCC 19707 / BCRC 17464 / JCM 30415 / NCIMB 11848 / C-107), this protein is DNA replication and repair protein RecF.